The sequence spans 365 residues: Peptide chain release factor 2 (365 aa).

Glutamine 252 carries the N5-methylglutamine modification.

The protein belongs to the prokaryotic/mitochondrial release factor family. Post-translationally, methylated by PrmC. Methylation increases the termination efficiency of RF2.

The protein localises to the cytoplasm. Its function is as follows. Peptide chain release factor 2 directs the termination of translation in response to the peptide chain termination codons UGA and UAA. The polypeptide is Peptide chain release factor 2 (Shigella flexneri).